The chain runs to 560 residues: Probable sulfate transporter Rv1739c (560 aa).

The tract at residues Met-1–Gly-436 is required for sulfate transport in E.coli. The next 11 membrane-spanning stretches (helical) occupy residues Val-29–Val-49, Gly-51–Leu-71, Ile-79–Gly-99, Ala-105–Ala-125, Val-138–Ile-158, Trp-184–Ala-204, Ala-207–Asp-227, Ala-256–Ala-276, Leu-333–Phe-353, Ile-355–Phe-375, and Ala-394–Leu-414. The region spanning Asp-442–Phe-557 is the STAS domain.

This sequence belongs to the SLC26A/SulP transporter (TC 2.A.53) family.

The protein localises to the cell membrane. In terms of biological role, expression in E.coli induces sulfate uptake during early- to mid-log phase growth. Uptake is maximal at pH 6.0, is sulfate-specific, requires E.coli CysA and the transmembrane segment but not the STAS domain of the protein. This Mycobacterium tuberculosis (strain ATCC 25618 / H37Rv) protein is Probable sulfate transporter Rv1739c.